The sequence spans 282 residues: ATP phosphoribosyltransferase (282 aa).

This sequence belongs to the ATP phosphoribosyltransferase family. Long subfamily. Requires Mg(2+) as cofactor.

Its subcellular location is the cytoplasm. The catalysed reaction is 1-(5-phospho-beta-D-ribosyl)-ATP + diphosphate = 5-phospho-alpha-D-ribose 1-diphosphate + ATP. It functions in the pathway amino-acid biosynthesis; L-histidine biosynthesis; L-histidine from 5-phospho-alpha-D-ribose 1-diphosphate: step 1/9. Its activity is regulated as follows. Feedback inhibited by histidine. Functionally, catalyzes the condensation of ATP and 5-phosphoribose 1-diphosphate to form N'-(5'-phosphoribosyl)-ATP (PR-ATP). Has a crucial role in the pathway because the rate of histidine biosynthesis seems to be controlled primarily by regulation of HisG enzymatic activity. In Micrococcus luteus (strain ATCC 4698 / DSM 20030 / JCM 1464 / CCM 169 / CCUG 5858 / IAM 1056 / NBRC 3333 / NCIMB 9278 / NCTC 2665 / VKM Ac-2230) (Micrococcus lysodeikticus), this protein is ATP phosphoribosyltransferase.